A 296-amino-acid polypeptide reads, in one-letter code: SPbeta prophage-derived endonuclease YokF (296 aa).

The signal sequence occupies residues 1–19 (MKKVLLGFAAFTLSLSLAA). Residue cysteine 20 is the site of N-palmitoyl cysteine attachment. Residue cysteine 20 is the site of S-diacylglycerol cysteine attachment. The disordered stretch occupies residues 20-65 (CSSNDSEKVSTEKETPQASTDVEKKTEQKESTKEKTADKSKEKDKK). Residues 24–65 (DSEKVSTEKETPQASTDVEKKTEQKESTKEKTADKSKEKDKK) show a composition bias toward basic and acidic residues. The TNase-like domain occupies 66-199 (ELVDVTLDRA…KSEKLSIWSK (134 aa)). Aspartate 79 lines the Ca(2+) pocket. Arginine 93 is a catalytic residue. Ca(2+) contacts are provided by aspartate 98 and threonine 99. Active-site residues include glutamate 101 and arginine 144. Residues 218-296 (AVKKATTSKP…RDHDNYACER (79 aa)) form a disordered region. Residues 219–244 (VKKATTSKPAATQPTTPKASSETSTT) show a composition bias toward low complexity. Residues 284 to 296 (KMDRDHDNYACER) are compositionally biased toward basic and acidic residues.

Requires Ca(2+) as cofactor. Cu(2+) is required as a cofactor. The cofactor is Mn(2+).

The protein localises to the cell membrane. Inhibited by aurintricalboxylic acid but not by Zn(2+), Mn(2+), Hg(2+), 2-mercaptoethanol and sodium citrate. Neither inhibited nor activated by ATP. Its function is as follows. Catalyzes the hydrolysis of supercoiled double and single strand DNA and RNA. Involved in chromosomal DNA degradation and cell death caused by thermal stress. This chain is SPbeta prophage-derived endonuclease YokF (yokF), found in Bacillus subtilis (strain 168).